Reading from the N-terminus, the 907-residue chain is Sensor protein GacS (907 aa).

3 consecutive transmembrane segments (helical) span residues 9-25 (ASLMAAMLGGYFTWMQL), 84-101 (VLAHAGPTMISPSPIGSG), and 159-178 (LFASLLLILTGLAFTATLAV). In terms of domain architecture, HAMP spans 182 to 234 (RTINGPMSQIKQAVSQLKDGNLETRLPPLGSRELDELASGINRMAATLQNAQE). The Histidine kinase domain maps to 281–502 (NMSHEIRTPL…EFWISLKLPK (222 aa)). Residue His-284 is modified to Phosphohistidine; by autocatalysis. A Response regulatory domain is found at 658–777 (RVLCVDDNPA…QLAQVVLKWT (120 aa)). 4-aspartylphosphate is present on Asp-707. The 94-residue stretch at 814-907 (KADLAADMLA…RLEAEARVMA (94 aa)) folds into the HPt domain. His-853 is modified (phosphohistidine).

Post-translationally, activation requires a sequential transfer of a phosphate group from a His in the primary transmitter domain, to an Asp in the receiver domain and to a His in the secondary transmitter domain.

Its subcellular location is the cell inner membrane. The catalysed reaction is ATP + protein L-histidine = ADP + protein N-phospho-L-histidine.. Functionally, forms part of a two-component regulatory system GacA/GacS(LemA). May be involved in lesion formation, swarming and in the production of extracellular protease, syringomycin and N-acyl-L-homoserine lactone (acyl-HSL). Required for pathogenicity on bean. The sequence is that of Sensor protein GacS (gacS) from Pseudomonas syringae pv. syringae.